The chain runs to 323 residues: Fructose-1,6-bisphosphatase class 1 (323 aa).

4 residues coordinate Mg(2+): Glu88, Asp107, Leu109, and Asp110. Substrate is bound by residues 110–113 (DGSS) and Asn200. Glu272 serves as a coordination point for Mg(2+).

This sequence belongs to the FBPase class 1 family. In terms of assembly, homotetramer. Mg(2+) serves as cofactor.

The protein resides in the cytoplasm. It catalyses the reaction beta-D-fructose 1,6-bisphosphate + H2O = beta-D-fructose 6-phosphate + phosphate. It participates in carbohydrate biosynthesis; gluconeogenesis. This Acinetobacter baylyi (strain ATCC 33305 / BD413 / ADP1) protein is Fructose-1,6-bisphosphatase class 1.